The following is a 158-amino-acid chain: Transcriptional repressor NrdR (158 aa).

Residues 3–34 (CPFCGNADTQVVDSRVSEEGDTIRRRRRCLSC) fold into a zinc finger. Residues 49–139 (PSVVKRNGSR…VYKNFEDIGE (91 aa)) form the ATP-cone domain.

This sequence belongs to the NrdR family. Requires Zn(2+) as cofactor.

In terms of biological role, negatively regulates transcription of bacterial ribonucleotide reductase nrd genes and operons by binding to NrdR-boxes. The protein is Transcriptional repressor NrdR of Bordetella petrii (strain ATCC BAA-461 / DSM 12804 / CCUG 43448).